The following is a 223-amino-acid chain: Holliday junction branch migration complex subunit RuvA (223 aa).

Residues methionine 1–isoleucine 67 form a domain I region. The tract at residues glutamate 68–proline 146 is domain II. The segment at proline 147–aspartate 157 is flexible linker. Positions leucine 158–lysine 223 are domain III.

It belongs to the RuvA family. In terms of assembly, homotetramer. Forms an RuvA(8)-RuvB(12)-Holliday junction (HJ) complex. HJ DNA is sandwiched between 2 RuvA tetramers; dsDNA enters through RuvA and exits via RuvB. An RuvB hexamer assembles on each DNA strand where it exits the tetramer. Each RuvB hexamer is contacted by two RuvA subunits (via domain III) on 2 adjacent RuvB subunits; this complex drives branch migration. In the full resolvosome a probable DNA-RuvA(4)-RuvB(12)-RuvC(2) complex forms which resolves the HJ.

The protein localises to the cytoplasm. The RuvA-RuvB-RuvC complex processes Holliday junction (HJ) DNA during genetic recombination and DNA repair, while the RuvA-RuvB complex plays an important role in the rescue of blocked DNA replication forks via replication fork reversal (RFR). RuvA specifically binds to HJ cruciform DNA, conferring on it an open structure. The RuvB hexamer acts as an ATP-dependent pump, pulling dsDNA into and through the RuvAB complex. HJ branch migration allows RuvC to scan DNA until it finds its consensus sequence, where it cleaves and resolves the cruciform DNA. The chain is Holliday junction branch migration complex subunit RuvA from Prochlorococcus marinus (strain MIT 9211).